The sequence spans 428 residues: Acetyltransferase sirH (428 aa).

Residue N8 is glycosylated (N-linked (GlcNAc...) asparagine). The next 6 helical transmembrane spans lie at 33-53, 55-75, 78-98, 305-325, 329-349, and 366-386; these read LLTPIFMAVAVLTTLPPPGPL, VIVGLTAFTSLWLHVLTHWVS, AFFMDAIFMISITVRWLLMFV, LYVGFLVSGVQHYACALLIPS, GWGMFWQMPAYAAVVTVEDIL, and FLGYIWTAYWMTLIYALPVGF.

This sequence belongs to the wax synthase family.

The protein resides in the membrane. The protein operates within polyketide biosynthesis. Functionally, acetyltransferase; part of the gene cluster that mediates the biosynthesis of asperlin, a polyketide showing anti-inflammatory, antitumor and antibiotic activities. The first step of the asperlin biosynthesis is the production of the intermediate 2,4,6-octatrienoic acid by the highly redusing polyketide synthase alnA with cleavage of the PKS product by the esterase alnB. 2,4,6-octatrienoic acid is further converted to asperlin via several steps involving the remaining enzymes from the cluster. This Emericella nidulans (strain FGSC A4 / ATCC 38163 / CBS 112.46 / NRRL 194 / M139) (Aspergillus nidulans) protein is Acetyltransferase sirH.